The chain runs to 201 residues: Protease (201 aa).

Residues histidine 56, aspartate 73, and cysteine 121 contribute to the active site.

It belongs to the peptidase C5 family. Interacts with protease cofactor pVI-C; this interaction is necessary for protease activation.

It localises to the virion. Its subcellular location is the host nucleus. The enzyme catalyses Cleaves proteins of the adenovirus and its host cell at two consensus sites: -Yaa-Xaa-Gly-Gly-|-Xaa- and -Yaa-Xaa-Gly-Xaa-|-Gly- (in which Yaa is Met, Ile or Leu, and Xaa is any amino acid).. With respect to regulation, requires DNA and protease cofactor for maximal activation. Inside nascent virions, becomes partially activated by binding to the viral DNA, allowing it to cleave the cofactor that binds to the protease and fully activates it. Actin, like the viral protease cofactor, seems to act as a cofactor in the cleavage of cytokeratin 18 and of actin itself. Cleaves viral precursor proteins (pTP, pIIIa, pVI, pVII, pVIII, and pX) inside newly assembled particles giving rise to mature virions. Protease complexed to its cofactor slides along the viral DNA to specifically locate and cleave the viral precursors. Mature virions have a weakened organization compared to the unmature virions, thereby facilitating subsequent uncoating. Without maturation, the particle lacks infectivity and is unable to uncoat. Late in adenovirus infection, in the cytoplasm, may participate in the cytoskeleton destruction. Cleaves host cell cytoskeletal keratins K7 and K18. The polypeptide is Protease (Homo sapiens (Human)).